The sequence spans 1028 residues: Multidrug resistance protein MdtC (1028 aa).

12 consecutive transmembrane segments (helical) span residues 3 to 23 (FFAL…AITL), 333 to 353 (EVEQ…FLFL), 360 to 380 (LIPA…MYLC), 387 to 407 (LSLM…IVVL), 431 to 451 (VGFT…PLLL), 463 to 483 (FAVT…TLTP), 528 to 548 (LVGV…ISIP), 853 to 873 (VILI…LYES), 875 to 895 (VHPL…LLAL), 897 to 917 (LFNA…IGIV), 953 to 973 (PIMM…ISGG), and 984 to 1004 (ITIV…TPVV).

The protein belongs to the resistance-nodulation-cell division (RND) (TC 2.A.6) family. MdtC subfamily. Part of a tripartite efflux system composed of MdtA, MdtB and MdtC. MdtC forms a heteromultimer with MdtB.

Its subcellular location is the cell inner membrane. This is Multidrug resistance protein MdtC from Citrobacter koseri (strain ATCC BAA-895 / CDC 4225-83 / SGSC4696).